We begin with the raw amino-acid sequence, 341 residues long: Dihydroorotate dehydrogenase (quinone) (341 aa).

FMN-binding positions include 61–65 and Thr-85; that span reads AGLDK. A substrate-binding site is contributed by Lys-65. 110-114 is a binding site for substrate; that stretch reads NRMGF. Asn-138 and Asn-171 together coordinate FMN. Asn-171 is a substrate binding site. The active-site Nucleophile is the Ser-174. A substrate-binding site is contributed by Asn-176. Lys-216 and Thr-244 together coordinate FMN. Residue 245–246 participates in substrate binding; that stretch reads NT. FMN-binding positions include Gly-267, Gly-296, and 317–318; that span reads YS.

It belongs to the dihydroorotate dehydrogenase family. Type 2 subfamily. As to quaternary structure, monomer. The cofactor is FMN.

It localises to the cell membrane. It catalyses the reaction (S)-dihydroorotate + a quinone = orotate + a quinol. The protein operates within pyrimidine metabolism; UMP biosynthesis via de novo pathway; orotate from (S)-dihydroorotate (quinone route): step 1/1. In terms of biological role, catalyzes the conversion of dihydroorotate to orotate with quinone as electron acceptor. In Pseudomonas fluorescens (strain SBW25), this protein is Dihydroorotate dehydrogenase (quinone).